The chain runs to 228 residues: Cytochrome c biogenesis ATP-binding export protein CcmA (228 aa).

The 226-residue stretch at 2-227 (LSIERLGVGR…LHLERSGAWL (226 aa)) folds into the ABC transporter domain. Position 34–41 (34–41 (GANGSGKT)) interacts with ATP. The interval 106-126 (GAPDGTSSVPASGRSGVAAPP) is disordered.

Belongs to the ABC transporter superfamily. CcmA exporter (TC 3.A.1.107) family. The complex is composed of two ATP-binding proteins (CcmA) and two transmembrane proteins (CcmB).

The protein resides in the cell inner membrane. It carries out the reaction heme b(in) + ATP + H2O = heme b(out) + ADP + phosphate + H(+). Its function is as follows. Part of the ABC transporter complex CcmAB involved in the biogenesis of c-type cytochromes; once thought to export heme, this seems not to be the case, but its exact role is uncertain. Responsible for energy coupling to the transport system. This Paraburkholderia xenovorans (strain LB400) protein is Cytochrome c biogenesis ATP-binding export protein CcmA.